The primary structure comprises 419 residues: UDP-N-acetylglucosamine 1-carboxyvinyltransferase (419 aa).

22–23 (KN) is a phosphoenolpyruvate binding site. Arginine 91 lines the UDP-N-acetyl-alpha-D-glucosamine pocket. Residue cysteine 115 is the Proton donor of the active site. A 2-(S-cysteinyl)pyruvic acid O-phosphothioketal modification is found at cysteine 115. UDP-N-acetyl-alpha-D-glucosamine is bound by residues 120–124 (RPVDL), 160–163 (KVSV), aspartate 305, and isoleucine 327.

Belongs to the EPSP synthase family. MurA subfamily.

The protein resides in the cytoplasm. The enzyme catalyses phosphoenolpyruvate + UDP-N-acetyl-alpha-D-glucosamine = UDP-N-acetyl-3-O-(1-carboxyvinyl)-alpha-D-glucosamine + phosphate. It functions in the pathway cell wall biogenesis; peptidoglycan biosynthesis. In terms of biological role, cell wall formation. Adds enolpyruvyl to UDP-N-acetylglucosamine. The sequence is that of UDP-N-acetylglucosamine 1-carboxyvinyltransferase from Cronobacter sakazakii (strain ATCC BAA-894) (Enterobacter sakazakii).